We begin with the raw amino-acid sequence, 237 residues long: Golgi anti-apoptotic protein (237 aa).

At 1 to 37 the chain is on the cytoplasmic side; sequence MAMPSLSACSSIEDDFNYGSSVASASVHIRMAFLRKV. A helical transmembrane segment spans residues 38 to 58; the sequence is YGILCLQFLLTTATTAVFLYF. Residues 59 to 67 lie on the Lumenal side of the membrane; sequence DCMRTFIQG. Residues 68–88 traverse the membrane as a helical segment; the sequence is SPVLILASMFGSIGLIFALTL. Residues 89-94 lie on the Cytoplasmic side of the membrane; sequence HRHKHP. Residues 95–115 form a helical membrane-spanning segment; that stretch reads LNLYLLCGFTLSESLTLASVV. Position 116 (Thr116) is a topological domain, lumenal. A helical transmembrane segment spans residues 117–137; sequence FYDVHVVMQAFMLTTAAFLAL. The Cytoplasmic segment spans residues 138–151; it reads TTYTLQSKRDFSKL. Residues 152–172 traverse the membrane as a helical segment; it reads GAGLFAALWILILSGLLGIFV. Topologically, residues 173–174 are lumenal; it reads QN. The helical transmembrane segment at 175–195 threads the bilayer; the sequence is ETVKLVLSAFGALVFCGFIIY. The Cytoplasmic segment spans residues 196–209; it reads DTHSLIHKLSPEEY. Residues 210–230 constitute an intramembrane region (helical); that stretch reads VLASINLYLDIINLFLHLLQL. The Cytoplasmic segment spans residues 231–237; sequence LEVSNKK.

It belongs to the BI1 family. LFG subfamily.

It is found in the host Golgi apparatus membrane. May affect virulence through inhibition of apoptosis. In Vaccinia virus (strain LC16m0) (VACV), this protein is Golgi anti-apoptotic protein (L6).